We begin with the raw amino-acid sequence, 215 residues long: Probable transaldolase 1 (215 aa).

Lys83 acts as the Schiff-base intermediate with substrate in catalysis.

Belongs to the transaldolase family. Type 3B subfamily.

The protein localises to the cytoplasm. The enzyme catalyses D-sedoheptulose 7-phosphate + D-glyceraldehyde 3-phosphate = D-erythrose 4-phosphate + beta-D-fructose 6-phosphate. Its pathway is carbohydrate degradation; pentose phosphate pathway; D-glyceraldehyde 3-phosphate and beta-D-fructose 6-phosphate from D-ribose 5-phosphate and D-xylulose 5-phosphate (non-oxidative stage): step 2/3. Transaldolase is important for the balance of metabolites in the pentose-phosphate pathway. The protein is Probable transaldolase 1 of Bacillus cereus (strain ATCC 14579 / DSM 31 / CCUG 7414 / JCM 2152 / NBRC 15305 / NCIMB 9373 / NCTC 2599 / NRRL B-3711).